We begin with the raw amino-acid sequence, 128 residues long: Large ribosomal subunit protein bL12 (128 aa).

The protein belongs to the bacterial ribosomal protein bL12 family. Homodimer. Part of the ribosomal stalk of the 50S ribosomal subunit. Forms a multimeric L10(L12)X complex, where L10 forms an elongated spine to which 2 to 4 L12 dimers bind in a sequential fashion. Binds GTP-bound translation factors.

Functionally, forms part of the ribosomal stalk which helps the ribosome interact with GTP-bound translation factors. Is thus essential for accurate translation. The polypeptide is Large ribosomal subunit protein bL12 (Acidithiobacillus ferrooxidans (strain ATCC 23270 / DSM 14882 / CIP 104768 / NCIMB 8455) (Ferrobacillus ferrooxidans (strain ATCC 23270))).